A 720-amino-acid chain; its full sequence is Putative glutamine--fructose-6-phosphate aminotransferase [isomerizing] (720 aa).

Residue Cys2 is the Nucleophile; for GATase activity of the active site. The Glutamine amidotransferase type-2 domain maps to 2–321; it reads CGIFGYCNFL…DNDIAHIYDG (320 aa). Residues 266–280 are compositionally biased toward polar residues; that stretch reads STTSTFNHGSSTETP. Residues 266–285 are disordered; it reads STTSTFNHGSSTETPAENGL. SIS domains are found at residues 393–532 and 565–710; these read WLTE…DLVS and CDKK…VDLP.

The catalysed reaction is D-fructose 6-phosphate + L-glutamine = D-glucosamine 6-phosphate + L-glutamate. It participates in nucleotide-sugar biosynthesis; UDP-N-acetyl-alpha-D-glucosamine biosynthesis; alpha-D-glucosamine 6-phosphate from D-fructose 6-phosphate: step 1/1. Its function is as follows. Involved in amino sugar synthesis (formation of chitin, supplies the amino sugars of asparagine-linked oligosaccharides of glycoproteins). The chain is Putative glutamine--fructose-6-phosphate aminotransferase [isomerizing] from Saccharomyces cerevisiae (strain RM11-1a) (Baker's yeast).